Here is a 405-residue protein sequence, read N- to C-terminus: 3-isopropylmalate dehydrogenase 2, chloroplastic (405 aa).

Residues 1 to 33 constitute a chloroplast transit peptide; it reads MAAALQTNIRTVKVPATFRAVSKQSLAPFRVRC. Ser-70 is subject to Phosphoserine. Position 114 to 129 (114 to 129) interacts with NAD(+); that stretch reads IGGYKWDNNEKHLRPE. 3 residues coordinate substrate: Arg-136, Arg-146, and Arg-174. Asn-234 provides a ligand contact to NAD(+). Asp-264 is a binding site for substrate. A Mg(2+)-binding site is contributed by Asp-264. Asn-265 serves as a coordination point for NAD(+). Residues Asp-288 and Asp-292 each contribute to the Mg(2+) site. 318–334 is an NAD(+) binding site; the sequence is EPIHGSAPDIAGQDKAN.

The protein belongs to the isocitrate and isopropylmalate dehydrogenases family. As to quaternary structure, homodimer. The cofactor is Mg(2+). It depends on Mn(2+) as a cofactor. In terms of tissue distribution, expressed at low levels in seedlings, cotyledons, hypocotyls, flowers, roots, pollen, leaves and stems.

It is found in the plastid. It localises to the chloroplast stroma. It carries out the reaction (2R,3S)-3-isopropylmalate + NAD(+) = 4-methyl-2-oxopentanoate + CO2 + NADH. The protein operates within amino-acid biosynthesis; L-leucine biosynthesis; L-leucine from 3-methyl-2-oxobutanoate: step 3/4. With respect to regulation, regulated by a thiol-based redox modification. Involved in leucine biosynthesis; catalyzes the oxidative decarboxylation step in leucine biosynthesis (primary metabolism). Catalyzes the oxidation of 3-carboxy-2-hydroxy-4-methylpentanoate (3-isopropylmalate, 3-IPM) to 3-carboxy-4-methyl-2-oxopentanoate. The product decarboxylates to 4-methyl-2 oxopentanoate. Required during pollen development and involved in embryo sac development. This chain is 3-isopropylmalate dehydrogenase 2, chloroplastic, found in Arabidopsis thaliana (Mouse-ear cress).